Consider the following 931-residue polypeptide: Beta-mannosidase A (931 aa).

An N-terminal signal peptide occupies residues 1–21 (MRHSIGLAAALLAPTLPVALG). N-linked (GlcNAc...) asparagine glycans are attached at residues N40, N79, N247, N282, and N347. E479 acts as the Proton donor in catalysis. Residues N550, N608, N658, N738, N790, N798, N830, and N918 are each glycosylated (N-linked (GlcNAc...) asparagine).

It belongs to the glycosyl hydrolase 2 family. Beta-mannosidase A subfamily. Homodimer. In terms of processing, N-glycosylated.

Its subcellular location is the secreted. The enzyme catalyses Hydrolysis of terminal, non-reducing beta-D-mannose residues in beta-D-mannosides.. The protein operates within glycan metabolism; N-glycan degradation. Functionally, exoglycosidase that cleaves the single beta-linked mannose residue from the non-reducing end of beta-mannosidic oligosaccharides of various complexity and length. Involved in the degradation of polymeric mannan and galactomannan. Releases the terminal mannose residue from mannobiose and mannotriose, as well as from galactosyl-mannobiose (GM2), galactosyl-mannotriose (GM3) and di-galactosyl-mannopentaose (G2M5). The protein is Beta-mannosidase A (mndA) of Aspergillus niger.